The chain runs to 439 residues: Glutamate--tRNA ligase 2 (439 aa).

The 'HIGH' region signature appears at 6 to 16 (PSPTGDMHIGN). The 'KMSKS' region motif lies at 232–236 (KMSKR). Lys-235 contributes to the ATP binding site.

This sequence belongs to the class-I aminoacyl-tRNA synthetase family. Glutamate--tRNA ligase type 1 subfamily. In terms of assembly, monomer.

Its subcellular location is the cytoplasm. The catalysed reaction is tRNA(Glu) + L-glutamate + ATP = L-glutamyl-tRNA(Glu) + AMP + diphosphate. Catalyzes the attachment of glutamate to tRNA(Glu) in a two-step reaction: glutamate is first activated by ATP to form Glu-AMP and then transferred to the acceptor end of tRNA(Glu). This Helicobacter pylori (strain P12) protein is Glutamate--tRNA ligase 2.